Here is a 179-residue protein sequence, read N- to C-terminus: Ribosome maturation factor RimM (179 aa).

The PRC barrel domain maps to 97–170 (DGELSWNFFV…LITVELPEGL (74 aa)).

It belongs to the RimM family. In terms of assembly, binds ribosomal protein uS19.

It is found in the cytoplasm. An accessory protein needed during the final step in the assembly of 30S ribosomal subunit, possibly for assembly of the head region. Essential for efficient processing of 16S rRNA. May be needed both before and after RbfA during the maturation of 16S rRNA. It has affinity for free ribosomal 30S subunits but not for 70S ribosomes. This Bacteroides thetaiotaomicron (strain ATCC 29148 / DSM 2079 / JCM 5827 / CCUG 10774 / NCTC 10582 / VPI-5482 / E50) protein is Ribosome maturation factor RimM.